The following is a 270-amino-acid chain: Lipopolysaccharide core biosynthesis glycosyltransferase LpsC (270 aa).

Belongs to the glycosyltransferase 2 family. WaaE/KdtX subfamily.

Its pathway is bacterial outer membrane biogenesis; LPS core biosynthesis. The protein is Lipopolysaccharide core biosynthesis glycosyltransferase LpsC (lpsC) of Rhizobium meliloti (strain 1021) (Ensifer meliloti).